A 1286-amino-acid chain; its full sequence is Lysine-specific demethylase JMJ705 (1286 aa).

The region spanning 25–66 is the JmjN domain; it reads APEFRPTAAEFADPVSYILKIEPAAAPYGICKVVPPLPPPPK. The disordered stretch occupies residues 82 to 105; that stretch reads PDDRSPSFPTRHQQVGLCPRRTRP. Positions 201-367 constitute a JmjC domain; the sequence is ETAWNMRGVA…IAKEAAIRRA (167 aa). 3 residues coordinate Fe cation: His-244, Glu-246, and His-335. Over residues 641–679 the composition is skewed to polar residues; sequence PNSSNNVGCVGTKLSSSSTERQERPSSQNAHCNGSSVIS. 3 disordered regions span residues 641–686, 1013–1060, and 1077–1164; these read PNSS…KGVR, AEPV…HSQE, and PAGT…PKQA. Over residues 1119–1136 the composition is skewed to polar residues; that stretch reads HASGQKSNVQEANANSAS. Residues 1167–1189 form a C2H2-type 1; degenerate zinc finger; that stretch reads YSCDIEGCSMSFRTKRDLSLHKS. 3 consecutive C2H2-type zinc fingers follow at residues 1190-1214, 1220-1244, and 1250-1276; these read DICP…RKVH, LTCP…LRVH, and YVCH…KTGH.

Requires Fe(2+) as cofactor. In terms of tissue distribution, expressed in leaves and flag leaves. Expressed at low levels in roots, shoots, stems and panicles.

It localises to the nucleus. The catalysed reaction is N(6),N(6),N(6)-trimethyl-L-lysyl(27)-[histone H3] + 2 2-oxoglutarate + 2 O2 = N(6)-methyl-L-lysyl(27)-[histone H3] + 2 formaldehyde + 2 succinate + 2 CO2. Its function is as follows. Histone demethylase that demethylates 'Lys-27' (H3K27me) of histone H3 with a specific activity for H3K27me3 and H3K27me2. No activity on H3K4me3, H3K9me3, H3K27me1 and H3K36me3. Involved in biotic stress response. May demethylate H3K27me3-marked defense-related genes and increase their basal and induced expression levels during pathogen infection. The polypeptide is Lysine-specific demethylase JMJ705 (JMJ705) (Oryza sativa subsp. japonica (Rice)).